Reading from the N-terminus, the 408-residue chain is L,D-transpeptidase 2 (408 aa).

A signal peptide spans 1 to 34 (MPKVGIAAQAGRTRVRRAWLTALMMTAVMIGAVA). The N-palmitoyl cysteine moiety is linked to residue cysteine 35. Residue cysteine 35 is the site of S-diacylglycerol cysteine attachment. Ca(2+) is bound by residues aspartate 232, glutamate 235, and glycine 236. Residues 253-378 (VIATADDNTK…VKRGDIVEVV (126 aa)) enclose the L,D-TPase catalytic domain. Residues tyrosine 318 and 331–332 (SG) each bind substrate. Histidine 336 serves as the catalytic Proton donor/acceptor. The active-site Nucleophile is the cysteine 354. Asparagine 356 is a binding site for substrate.

In terms of assembly, monomer.

It is found in the cell membrane. It participates in cell wall biogenesis; peptidoglycan biosynthesis. Is irreversibly inactivated by the beta-lactams carbapenems via the formation of a covalent adduct resulting from acylation of the catalytic Cys. Functionally, generates 3-&gt;3 cross-links in peptidoglycan, catalyzing the cleavage of the mDap(3)-D-Ala(4) bond of a tetrapeptide donor stem and the formation of a bond between the carbonyl of mDap(3) of the donor stem and the side chain of mDap(3) of the acceptor stem. Is specific for donor substrates containing a stem tetrapeptide since it cannot use pentapeptide stems. Is essential for virulence in a mouse model of acute infection. This is L,D-transpeptidase 2 (ldtB) from Mycobacterium tuberculosis (strain CDC 1551 / Oshkosh).